The following is a 593-amino-acid chain: Proline--tRNA ligase (593 aa).

It belongs to the class-II aminoacyl-tRNA synthetase family. ProS type 1 subfamily. Homodimer.

It is found in the cytoplasm. It catalyses the reaction tRNA(Pro) + L-proline + ATP = L-prolyl-tRNA(Pro) + AMP + diphosphate. Catalyzes the attachment of proline to tRNA(Pro) in a two-step reaction: proline is first activated by ATP to form Pro-AMP and then transferred to the acceptor end of tRNA(Pro). As ProRS can inadvertently accommodate and process non-cognate amino acids such as alanine and cysteine, to avoid such errors it has two additional distinct editing activities against alanine. One activity is designated as 'pretransfer' editing and involves the tRNA(Pro)-independent hydrolysis of activated Ala-AMP. The other activity is designated 'posttransfer' editing and involves deacylation of mischarged Ala-tRNA(Pro). The misacylated Cys-tRNA(Pro) is not edited by ProRS. In Parasynechococcus marenigrum (strain WH8102), this protein is Proline--tRNA ligase.